The following is a 1064-amino-acid chain: Rab GTPase-activating protein 1 (1064 aa).

The interval 1–101 (MDDKASVGKI…SNQLSASSTI (101 aa)) is disordered. Residues 7–22 (VGKISVSSDSVSTLNS) show a composition bias toward low complexity. At S42 the chain carries Phosphoserine. Residues 91-101 (LSNQLSASSTI) show a composition bias toward polar residues. One can recognise a PID domain in the interval 137–293 (EDSVVFNKLT…IFTFSVSLEI (157 aa)). At S355 the chain carries Phosphoserine. The tract at residues 478-520 (RERRKTTASPSVRLPQSGSQSSMIPSPPEDDEEEDNDEPLLSG) is disordered. Residues 484 to 501 (TASPSVRLPQSGSQSSMI) are compositionally biased toward polar residues. A compositionally biased stretch (acidic residues) spans 505 to 515 (PEDDEEEDNDE). In terms of domain architecture, Rab-GAP TBC spans 561–747 (GVPEALRGEV…HIIDLLLCEG (187 aa)). A coiled-coil region spans residues 805 to 1038 (SQKKLKKFEK…HLGLALSEVQ (234 aa)). T991 is modified (phosphothreonine).

As to quaternary structure, interacts with RAB6A and tubulin gamma.

The protein localises to the cytoplasm. It localises to the cytosol. Its subcellular location is the cytoskeleton. The protein resides in the microtubule organizing center. It is found in the centrosome. In terms of biological role, may act as a GTPase-activating protein of RAB6A. May play a role in microtubule nucleation by centrosome. May participate in a RAB6A-mediated pathway involved in the metaphase-anaphase transition. In Mus musculus (Mouse), this protein is Rab GTPase-activating protein 1.